Consider the following 267-residue polypeptide: Extensin (267 aa).

Residues 1-267 form a disordered region; it reads MCPAFSIFFN…HTPSPPPPYY (267 aa). 13 repeats span residues 18–33, 34–54, 55–70, 71–91, 92–107, 108–128, 129–144, 145–160, 161–179, 180–195, 196–211, 212–232, and 233–253; these read PPTY…PKPT and PPTY…YTPT. Residues 18-253 are highly repetitive; sequence PPTYTPSPKP…ATKPPTYTPT (236 aa). A compositionally biased stretch (pro residues) spans 20 to 267; that stretch reads TYTPSPKPPT…HTPSPPPPYY (248 aa). The interval 261 to 265 is extensin repetitive element; it reads SPPPP.

Hydroxylated on proline residues in the S-P-P-P-P repeat. In terms of processing, O-glycosylated on hydroxyprolines. As to expression, mainly in the coleoptile node and root tip.

It is found in the secreted. Its subcellular location is the primary cell wall. Its function is as follows. Structural component in primary cell wall. In Zea mays (Maize), this protein is Extensin (HRGP).